The following is a 5900-amino-acid chain: Midasin (5900 aa).

Positions 250 to 270 (GSSVKSKKGGEQQQEGEGEDE) are disordered. 6 AAA-ATPase protomer regions span residues 278-583 (TNTV…LRKQ), 673-1012 (EKIS…ALNY), 1101-1346 (PIIP…IAGY), 1411-1721 (IVWT…MDKQ), 1840-2089 (RGMQ…HVLT), and 2167-2451 (LENI…EIYM). Residues 302–309 (GVTGSGKT) and 689–696 (GETGTGKT) contribute to the ATP site. A disordered region spans residues 796–826 (QTTTNNTKENNNNNNNNNNNNNNNNNNKKRT). Low complexity predominate over residues 797-821 (TTTNNTKENNNNNNNNNNNNNNNNN). Residues 1135 to 1142 (GPTSSGKT), 1438 to 1445 (GETGCSKT), 1852 to 1859 (GSPGVGKT), and 2184 to 2191 (GPTSTSKT) each bind ATP. A linker region spans residues 2562–4965 (ESAIKSILCE…EGKGKKDVSD (2404 aa)). Residues 4932–5598 (GDDGEGGEGG…SVEEKKLTRE (667 aa)) form a disordered region. Over residues 4984–5008 (KDEDEDEEKEEKDEDEGFDMQDDFE) the composition is skewed to acidic residues. The segment covering 5009–5055 (GEMHDIKKDENKDEDKKDDPNNEKENDKEMGDLEKPEDNVVDEKLWD) has biased composition (basic and acidic residues). The segment covering 5056-5076 (EQDVQDEEEQDEEGKGDETNS) has biased composition (acidic residues). Over residues 5079 to 5113 (MMAKQDGKDDNDDDKKDDDKKDDKKKKKEENGKPD) the composition is skewed to basic and acidic residues. 2 stretches are compositionally biased toward acidic residues: residues 5114 to 5130 (ENEE…EDGK) and 5139 to 5156 (GASD…DDVI). A compositionally biased stretch (basic and acidic residues) spans 5159 to 5173 (EQEKEENHGDPRGDD). Acidic residues predominate over residues 5174–5199 (QMEIPEDLELEDPDEGKEDDEQQDGG). Residues 5213–5224 (DVSKEEEKKKEL) show a composition bias toward basic and acidic residues. Acidic residues-rich tracts occupy residues 5225–5255 (DGDE…EDKE) and 5273–5286 (EGDE…EEDQ). A compositionally biased stretch (basic and acidic residues) spans 5297–5313 (ETPKDSEQPLGVKDKTG). Residues 5339-5349 (GMTQPTPSEND) show a composition bias toward polar residues. The segment covering 5410–5442 (SEPKEKAPKQDPNAKENENQDYEFIKDDEKLDK) has biased composition (basic and acidic residues). The span at 5448–5460 (QALAAATDTQLQD) shows a compositional bias: low complexity. Over residues 5469 to 5487 (DQAEQEEDQMDIDEEDDMD) the composition is skewed to acidic residues. Basic and acidic residues-rich tracts occupy residues 5488-5536 (VDHK…KDQQ) and 5551-5570 (QFTK…KAVL). The segment covering 5571-5590 (DDGDDQEMEQDGDQDDEESV) has biased composition (acidic residues). The 194-residue stretch at 5696 to 5889 (QVLLAIDDTE…NIPSILSDTL (194 aa)) folds into the VWFA domain.

It belongs to the midasin family. In terms of assembly, associates with pre-60S ribosomes in the nucleoplasm.

The protein localises to the nucleus. It localises to the nucleolus. The protein resides in the nucleoplasm. In terms of biological role, nuclear chaperone required for maturation and nuclear export of pre-60S ribosome subunits. Functions at successive maturation steps to remove ribosomal factors at critical transition points, first driving the exit of early pre-60S particles from the nucleolus and then driving late pre-60S particles from the nucleus. The sequence is that of Midasin (mdn1) from Dictyostelium discoideum (Social amoeba).